The following is a 208-amino-acid chain: Small ribosomal subunit protein uS4 (208 aa).

Residues Arg98–Gln161 enclose the S4 RNA-binding domain.

The protein belongs to the universal ribosomal protein uS4 family. Part of the 30S ribosomal subunit. Contacts protein S5. The interaction surface between S4 and S5 is involved in control of translational fidelity.

In terms of biological role, one of the primary rRNA binding proteins, it binds directly to 16S rRNA where it nucleates assembly of the body of the 30S subunit. Its function is as follows. With S5 and S12 plays an important role in translational accuracy. This Desulfovibrio desulfuricans (strain ATCC 27774 / DSM 6949 / MB) protein is Small ribosomal subunit protein uS4.